Consider the following 103-residue polypeptide: ESAT-6-like protein EsxF (103 aa).

It belongs to the WXG100 family. CFP-10 subfamily.

The protein localises to the secreted. In Mycobacterium tuberculosis (strain CDC 1551 / Oshkosh), this protein is ESAT-6-like protein EsxF.